A 291-amino-acid chain; its full sequence is Protease HtpX homolog (291 aa).

A run of 2 helical transmembrane segments spans residues 4–24 (VFLF…SARL) and 38–58 (LGML…ISLL). Histidine 144 is a Zn(2+) binding site. Glutamate 145 is a catalytic residue. Histidine 148 is a binding site for Zn(2+). 2 helical membrane passes run 159–179 (LIQG…AYAL) and 199–219 (ISSI…VMYF). A Zn(2+)-binding site is contributed by glutamate 224.

This sequence belongs to the peptidase M48B family. It depends on Zn(2+) as a cofactor.

It is found in the cell inner membrane. This chain is Protease HtpX homolog, found in Chlorobium luteolum (strain DSM 273 / BCRC 81028 / 2530) (Pelodictyon luteolum).